The primary structure comprises 739 residues: Cellulose synthase catalytic subunit [UDP-forming] (739 aa).

A run of 4 helical transmembrane segments spans residues Val36–Ala55, Leu59–Leu76, Leu83–Phe101, and Met116–Val138. Residues Glu157 to Val250 form a catalytic subdomain A region. The active site involves Asp199. Substrate contacts are provided by Asp246 and Asp248. The segment at Glu327–Met387 is catalytic subdomain B. Asp343 is a catalytic residue. Transmembrane regions (helical) follow at residues Phe417–Phe436, Ile440–Thr462, Pro524–Gly546, and Ala551–Ala573. The PilZ domain maps to Gln580 to Ser677.

This sequence belongs to the glycosyltransferase 2 family. It depends on Mg(2+) as a cofactor.

It is found in the cell inner membrane. It catalyses the reaction [(1-&gt;4)-beta-D-glucosyl](n) + UDP-alpha-D-glucose = [(1-&gt;4)-beta-D-glucosyl](n+1) + UDP + H(+). It functions in the pathway glycan metabolism; bacterial cellulose biosynthesis. Activated by bis-(3'-5') cyclic diguanylic acid (c-di-GMP). Functionally, catalytic subunit of cellulose synthase. It polymerizes uridine 5'-diphosphate glucose to cellulose, which is produced as an extracellular component responsible for the structural integrity and rigidity of self-supporting mats characteristic of the 'wrinkly spreader' phenotype. This Pseudomonas fluorescens (strain SBW25) protein is Cellulose synthase catalytic subunit [UDP-forming] (bcsA).